Consider the following 338-residue polypeptide: Large ribosomal subunit protein uL10 (338 aa).

The segment at 297-338 (PSAQQTQTQQSTAEEKKEEKKEEEKKGPSEEEIGSGLASLFG) is disordered. Low complexity predominate over residues 298-308 (SAQQTQTQQST). Basic and acidic residues predominate over residues 309 to 325 (AEEKKEEKKEEEKKGPS).

The protein belongs to the universal ribosomal protein uL10 family. In terms of assembly, part of the 50S ribosomal subunit. Forms part of the ribosomal stalk which helps the ribosome interact with GTP-bound translation factors. Forms a heptameric L10(L12)2(L12)2(L12)2 complex, where L10 forms an elongated spine to which the L12 dimers bind in a sequential fashion.

In terms of biological role, forms part of the ribosomal stalk, playing a central role in the interaction of the ribosome with GTP-bound translation factors. This is Large ribosomal subunit protein uL10 from Saccharolobus islandicus (strain Y.N.15.51 / Yellowstone #2) (Sulfolobus islandicus).